Consider the following 189-residue polypeptide: Photosystem I assembly protein Ycf4 (189 aa).

2 helical membrane passes run 25-45 (SVYF…LAGL) and 62-82 (LVFI…SLAG).

This sequence belongs to the Ycf4 family.

It localises to the cellular thylakoid membrane. Seems to be required for the assembly of the photosystem I complex. This Synechococcus sp. (strain JA-3-3Ab) (Cyanobacteria bacterium Yellowstone A-Prime) protein is Photosystem I assembly protein Ycf4.